Here is a 247-residue protein sequence, read N- to C-terminus: Transmembrane protein 69 (247 aa).

The next 5 helical transmembrane spans lie at 97–117, 122–142, 159–179, 185–205, and 216–236; these read ALCV…VMLM, IPIL…FLGG, YLNL…FLIS, AIVT…FLLP, and IVVT…KSSF.

It is found in the membrane. The chain is Transmembrane protein 69 (TMEM69) from Homo sapiens (Human).